The chain runs to 117 residues: Large ribosomal subunit protein uL18 (117 aa).

The protein belongs to the universal ribosomal protein uL18 family. As to quaternary structure, part of the 50S ribosomal subunit; part of the 5S rRNA/L5/L18/L25 subcomplex. Contacts the 5S and 23S rRNAs.

Functionally, this is one of the proteins that bind and probably mediate the attachment of the 5S RNA into the large ribosomal subunit, where it forms part of the central protuberance. The protein is Large ribosomal subunit protein uL18 of Blochmanniella floridana.